The primary structure comprises 585 residues: Glutamate decarboxylase 2 (585 aa).

A disordered region spans residues 1–24; it reads MASPGSGFWSFGSEDGSADPENPG. 4 positions are modified to phosphoserine: S3, S6, S10, and S13. S-palmitoyl cysteine attachment occurs at residues C30 and C45. 181–183 is a binding site for substrate; it reads QLS. An N6-(pyridoxal phosphate)lysine modification is found at K396. R558 serves as a coordination point for substrate.

This sequence belongs to the group II decarboxylase family. As to quaternary structure, homodimer. Pyridoxal 5'-phosphate serves as cofactor. Phosphorylated; which does not affect kinetic parameters or subcellular location. Post-translationally, palmitoylated; which is required for presynaptic clustering.

The protein resides in the cytoplasm. Its subcellular location is the cytosol. It is found in the cytoplasmic vesicle. The protein localises to the presynaptic cell membrane. It localises to the golgi apparatus membrane. It catalyses the reaction L-glutamate + H(+) = 4-aminobutanoate + CO2. Functionally, catalyzes the production of GABA. This is Glutamate decarboxylase 2 (Gad2) from Mus musculus (Mouse).